The chain runs to 126 residues: Glycine cleavage system H protein (126 aa).

The Lipoyl-binding domain maps to 24 to 106; sequence TVTVGITDHA…YGEGWMYRIK (83 aa). K65 bears the N6-lipoyllysine mark.

This sequence belongs to the GcvH family. The glycine cleavage system is composed of four proteins: P, T, L and H. Requires (R)-lipoate as cofactor.

The glycine cleavage system catalyzes the degradation of glycine. The H protein shuttles the methylamine group of glycine from the P protein to the T protein. This chain is Glycine cleavage system H protein, found in Psychrobacter sp. (strain PRwf-1).